A 231-amino-acid polypeptide reads, in one-letter code: MVEINDIIKLYTVHPNLDLIDKNFAEDCEFEAFNIPSFKVKGIEAIHEIFKAIGFYAKDIKISKYNYTHSSHCIVLNTQQEITFNILPFVKFNYRMIINIHKNKENKITKFEEITDLESVIQNIPLANYGYFNIIKPALGYLMVKAGSYNRGFQNNGPNKIQATMERLSDNFVEKKEVNYSEPLIKLSKNFNGVTHQDKIDNMDEELFNSKKIDIKDGSNNAWKKPLNLHQ.

This Dictyostelium discoideum (Social amoeba) protein is SrfA-induced gene F protein (sigF).